The primary structure comprises 174 residues: Peptide methionine sulfoxide reductase MsrA (174 aa).

C11 is an active-site residue.

It belongs to the MsrA Met sulfoxide reductase family.

It carries out the reaction L-methionyl-[protein] + [thioredoxin]-disulfide + H2O = L-methionyl-(S)-S-oxide-[protein] + [thioredoxin]-dithiol. The catalysed reaction is [thioredoxin]-disulfide + L-methionine + H2O = L-methionine (S)-S-oxide + [thioredoxin]-dithiol. Functionally, has an important function as a repair enzyme for proteins that have been inactivated by oxidation. Catalyzes the reversible oxidation-reduction of methionine sulfoxide in proteins to methionine. This chain is Peptide methionine sulfoxide reductase MsrA, found in Nitratiruptor sp. (strain SB155-2).